The primary structure comprises 690 residues: MAKDFLLEIGTEEIPAKFAPGVLNQLREQAQKHCQELRLDYQDLKVYTTPRRFAVLIQGLAEKQTDFTAEVKGPAVKAAYDAEGNPTKAAQGFARGQGVEPKDLFVQELNGVSYVYARKFELGQPTLQLLPKLCTDLITGLHFPKPMRWADLEFRFARPIRWIVALFGSEVIPFEFVGLASGKASRGHRTLGGPVTLDSPADYEKQMLQAFVMVDPEQRRQSVWEQIHALAAKVGGDVEKDDDLLDEVTHIIEYPTALLGEVAPNYMHLPEPVITTPMKEHQRYFPVRDKEGKLLPYFITVRNGDDHALAKVKAGNEKVLKARLEDAAFYYREDQKTPLAELVEKLDKVTYHEKLGSVRQRVERIRTLARGIAARLGMESKKQDLVERTALLAKADLVTLMVYDFPELQGIMGADYARMVGEKPEVCTGILEHYQPRFAGDELPQSYTGQIVSVADKLDAIVGAFGIGIQPTGSQDPYALRRQAQGVVGIILEAGWDISLEQLIAASYVNFAEQGISLLPLADLQSALQDFFQQRLRFVLQEQGARYDTLDAVLAQGSNQITRAARKAQVLAAKRETTEFVPYSQAYIRCLNLSKKAQTQPLDPKNLIDPTEIALAAALVQRQEAFAALIEKGDYAEAYALASELIPMIEALFNAVMIMVEDEILKQARLALLGECVAILGCLGDLSLLA.

It belongs to the class-II aminoacyl-tRNA synthetase family. In terms of assembly, tetramer of two alpha and two beta subunits.

It localises to the cytoplasm. The enzyme catalyses tRNA(Gly) + glycine + ATP = glycyl-tRNA(Gly) + AMP + diphosphate. The sequence is that of Glycine--tRNA ligase beta subunit from Desulfitobacterium hafniense (strain Y51).